Reading from the N-terminus, the 316-residue chain is 4-amino-5-hydroxymethyl-2-methylpyrimidine phosphate synthase (316 aa).

Residue K66 is modified to N6-(pyridoxal phosphate)lysine. H70 is an active-site residue. G118–G121 serves as a coordination point for pyridoxal 5'-phosphate. Positions C191–C195 match the CCCFC; essential for catalytic activity, may be the site of iron coordination motif.

Belongs to the NMT1/THI5 family. Homodimer. It depends on Fe cation as a cofactor.

The catalysed reaction is N(6)-(pyridoxal phosphate)-L-lysyl-[4-amino-5-hydroxymethyl-2-methylpyrimidine phosphate synthase] + L-histidyl-[4-amino-5-hydroxymethyl-2-methylpyrimidine phosphate synthase] + 2 Fe(3+) + 4 H2O = L-lysyl-[4-amino-5-hydroxymethyl-2-methylpyrimidine phosphate synthase] + (2S)-2-amino-5-hydroxy-4-oxopentanoyl-[4-amino-5-hydroxymethyl-2-methylpyrimidine phosphate synthase] + 4-amino-2-methyl-5-(phosphooxymethyl)pyrimidine + 3-oxopropanoate + 2 Fe(2+) + 2 H(+). It functions in the pathway cofactor biosynthesis; thiamine diphosphate biosynthesis. Responsible for the formation of the pyrimidine heterocycle in the thiamine biosynthesis pathway. Catalyzes the formation of hydroxymethylpyrimidine phosphate (HMP-P) from histidine and pyridoxal phosphate (PLP). The protein uses PLP and the active site histidine to form HMP-P, generating an inactive enzyme. The enzyme can only undergo a single turnover, which suggests it is a suicide enzyme. The polypeptide is 4-amino-5-hydroxymethyl-2-methylpyrimidine phosphate synthase (Legionella pneumophila subsp. pneumophila (strain Philadelphia 1 / ATCC 33152 / DSM 7513)).